Reading from the N-terminus, the 505-residue chain is ATP synthase subunit alpha, cyanelle (505 aa).

Gly-170–Thr-177 provides a ligand contact to ATP.

It belongs to the ATPase alpha/beta chains family. In terms of assembly, F-type ATPases have 2 components, CF(1) - the catalytic core - and CF(0) - the membrane proton channel. CF(1) has five subunits: alpha(3), beta(3), gamma(1), delta(1), epsilon(1). CF(0) has four main subunits: a, b, b' and c.

The protein resides in the plastid. The protein localises to the cyanelle thylakoid membrane. It carries out the reaction ATP + H2O + 4 H(+)(in) = ADP + phosphate + 5 H(+)(out). Its function is as follows. Produces ATP from ADP in the presence of a proton gradient across the membrane. The alpha chain is a regulatory subunit. The sequence is that of ATP synthase subunit alpha, cyanelle from Cyanophora paradoxa.